Consider the following 344-residue polypeptide: Fructose-1,6-bisphosphatase class 1 (344 aa).

The Mg(2+) site is built by glutamate 107, aspartate 129, leucine 131, and aspartate 132. Asparagine 224, tyrosine 252, and lysine 282 together coordinate substrate. Glutamate 288 contributes to the Mg(2+) binding site.

The protein belongs to the FBPase class 1 family. Homotetramer. Mg(2+) is required as a cofactor.

It localises to the cytoplasm. It carries out the reaction beta-D-fructose 1,6-bisphosphate + H2O = beta-D-fructose 6-phosphate + phosphate. It functions in the pathway carbohydrate biosynthesis; Calvin cycle. The sequence is that of Fructose-1,6-bisphosphatase class 1 from Synechococcus sp. (strain ATCC 27144 / PCC 6301 / SAUG 1402/1) (Anacystis nidulans).